A 466-amino-acid polypeptide reads, in one-letter code: Asparagine--tRNA ligase (466 aa).

The protein belongs to the class-II aminoacyl-tRNA synthetase family. In terms of assembly, homodimer.

It localises to the cytoplasm. The enzyme catalyses tRNA(Asn) + L-asparagine + ATP = L-asparaginyl-tRNA(Asn) + AMP + diphosphate + H(+). This Aeromonas hydrophila subsp. hydrophila (strain ATCC 7966 / DSM 30187 / BCRC 13018 / CCUG 14551 / JCM 1027 / KCTC 2358 / NCIMB 9240 / NCTC 8049) protein is Asparagine--tRNA ligase.